The following is a 563-amino-acid chain: Adenine deaminase (563 aa).

This sequence belongs to the metallo-dependent hydrolases superfamily. Adenine deaminase family. The cofactor is Mn(2+).

It carries out the reaction adenine + H2O + H(+) = hypoxanthine + NH4(+). This is Adenine deaminase from Lactiplantibacillus plantarum (strain ATCC BAA-793 / NCIMB 8826 / WCFS1) (Lactobacillus plantarum).